The primary structure comprises 274 residues: Proteasome subunit beta (274 aa).

The propeptide at 1 to 52 is removed in mature form; by autocatalysis; the sequence is MADPMGGAGRLPAVFMTPGTSSFTDFLSQSAPHLLPGARGGLPGPVTEVAHG. The active-site Nucleophile is the Thr53.

The protein belongs to the peptidase T1B family. As to quaternary structure, the 20S proteasome core is composed of 14 alpha and 14 beta subunits that assemble into four stacked heptameric rings, resulting in a barrel-shaped structure. The two inner rings, each composed of seven catalytic beta subunits, are sandwiched by two outer rings, each composed of seven alpha subunits. The catalytic chamber with the active sites is on the inside of the barrel. Has a gated structure, the ends of the cylinder being occluded by the N-termini of the alpha-subunits. Is capped by the proteasome-associated ATPase, ARC.

The protein localises to the cytoplasm. The catalysed reaction is Cleavage of peptide bonds with very broad specificity.. Its pathway is protein degradation; proteasomal Pup-dependent pathway. With respect to regulation, the formation of the proteasomal ATPase ARC-20S proteasome complex, likely via the docking of the C-termini of ARC into the intersubunit pockets in the alpha-rings, may trigger opening of the gate for substrate entry. Interconversion between the open-gate and close-gate conformations leads to a dynamic regulation of the 20S proteasome proteolysis activity. Functionally, component of the proteasome core, a large protease complex with broad specificity involved in protein degradation. In Frankia alni (strain DSM 45986 / CECT 9034 / ACN14a), this protein is Proteasome subunit beta.